Reading from the N-terminus, the 616-residue chain is UvrABC system protein C (616 aa).

One can recognise a GIY-YIG domain in the interval 21–99 (HQPGVYRMYD…IKLYLPKYNV (79 aa)). Residues 209 to 244 (RQVIASLVEKMEQASQSLNFEQAATFRDQIQALRRV) enclose the UVR domain.

The protein belongs to the UvrC family. Interacts with UvrB in an incision complex.

It localises to the cytoplasm. The UvrABC repair system catalyzes the recognition and processing of DNA lesions. UvrC both incises the 5' and 3' sides of the lesion. The N-terminal half is responsible for the 3' incision and the C-terminal half is responsible for the 5' incision. The sequence is that of UvrABC system protein C from Photobacterium profundum (strain SS9).